Here is a 1441-residue protein sequence, read N- to C-terminus: ABC transporter G family member 51 (1441 aa).

The interval 52-71 (VLPDPDGLGGGDGGGRGEGQ) is disordered. The span at 58 to 69 (GLGGGDGGGRGE) shows a compositional bias: gly residues. The ABC transporter 1 domain occupies 154–428 (LISSHLLRPD…FKSLGFSLPP (275 aa)). 187–194 (GPPASGKS) contributes to the ATP binding site. The 214-residue stretch at 505–718 (SLVRACFARE…AQRAVSVNEF (214 aa)) folds into the ABC transmembrane type-2 1 domain. 6 helical membrane passes run 523-543 (FLYT…STLF), 558-578 (LYLA…FTEM), 615-635 (FIEA…APTV), 642-662 (MLLL…MGAI), 668-688 (IAST…GFVV), and 751-771 (FWIG…MFTL). Residues 838-1090 (MTFHNVNYYV…DMINYFQGIP (253 aa)) enclose the ABC transporter 2 domain. 883–890 (GASGSGKT) is a binding site for ATP. Residues 1163–1380 (TQFMVCLRKQ…TLRGVITSQL (218 aa)) form the ABC transmembrane type-2 2 domain. A run of 7 helical transmembrane segments spans residues 1184–1204 (VVRL…FWNV), 1214–1234 (ILLL…NNAS), 1271–1291 (VEIP…YFMV), 1300–1320 (LVLY…YGMV), 1330–1350 (MASV…GFLI), 1355–1375 (IPGW…LRGV), and 1413–1433 (ATVA…AISI).

Belongs to the ABC transporter superfamily. ABCG family. PDR (TC 3.A.1.205) subfamily.

It localises to the membrane. May be a general defense protein. The polypeptide is ABC transporter G family member 51 (Oryza sativa subsp. japonica (Rice)).